Reading from the N-terminus, the 354-residue chain is Peptide-N(4)-(N-acetyl-beta-D-glucosaminyl)asparagine amidase F (354 aa).

An N-terminal signal peptide occupies residues 1 to 40 (MRKLLIFSISAYLMAGIVSCKGVDSATPVTEDRLALNAVN). A disulfide bridge connects residues Cys91 and Cys96. Active-site residues include Asp100, Glu158, and Glu246. 2 cysteine pairs are disulfide-bonded: Cys244–Cys248 and Cys271–Cys292.

In terms of assembly, monomer.

It carries out the reaction Hydrolysis of an N(4)-(acetyl-beta-D-glucosaminyl)asparagine residue in which the glucosamine residue may be further glycosylated, to yield a (substituted) N-acetyl-beta-D-glucosaminylamine and a peptide containing an aspartate residue.. Its function is as follows. Cleaves an entire glycan from a glycoprotein. Requires that the glycosylated asparagine moiety (reaction 1) be substituted on its amino (R1) and carboxyl (R2) terminus with a polypeptide chain. This Elizabethkingia miricola (Chryseobacterium miricola) protein is Peptide-N(4)-(N-acetyl-beta-D-glucosaminyl)asparagine amidase F (ngl).